Consider the following 391-residue polypeptide: Galactarate dehydratase (D-threo-forming) (391 aa).

A substrate-binding site is contributed by Arg15. Mg(2+) contacts are provided by Asp42 and His45. Residue Tyr89 coordinates substrate. Residue Tyr90 is the Proton donor of the active site. Residue Tyr164 is the Proton acceptor of the active site. Residues Asp193, Glu221, and His246 each coordinate Mg(2+). Thr296 serves as a coordination point for substrate. Thr297 is a Mg(2+) binding site. Arg385 serves as a coordination point for substrate.

This sequence belongs to the mandelate racemase/muconate lactonizing enzyme family. Requires Mg(2+) as cofactor.

It carries out the reaction galactarate = (2S,3R)-dihydroxy-5-oxohexanedioate + H2O. Its function is as follows. Catalyzes the regioselective dehydration of galactarate into 2-keto-D-threo-4,5-dihydroxyadipate ((2S,3R)-dihydroxy-5-oxohexanedioate). Is not active on other acid sugars. The protein is Galactarate dehydratase (D-threo-forming) of Oceanobacillus iheyensis (strain DSM 14371 / CIP 107618 / JCM 11309 / KCTC 3954 / HTE831).